The sequence spans 98 residues: Feather keratin 3 (98 aa).

It belongs to the avian keratin family. As to quaternary structure, the avian keratins (F-ker, S-ker, C-ker and B-ker) are a complex mixture of very similar polypeptides.

The chain is Feather keratin 3 from Gallus gallus (Chicken).